A 156-amino-acid chain; its full sequence is 6,7-dimethyl-8-ribityllumazine synthase (156 aa).

5-amino-6-(D-ribitylamino)uracil is bound by residues Phe23, 57 to 59 (AYE), and 81 to 83 (AII). Position 86 to 87 (86 to 87 (GT)) interacts with (2S)-2-hydroxy-3-oxobutyl phosphate. Catalysis depends on His89, which acts as the Proton donor. Residue Phe114 coordinates 5-amino-6-(D-ribitylamino)uracil. Arg128 provides a ligand contact to (2S)-2-hydroxy-3-oxobutyl phosphate.

It belongs to the DMRL synthase family.

It catalyses the reaction (2S)-2-hydroxy-3-oxobutyl phosphate + 5-amino-6-(D-ribitylamino)uracil = 6,7-dimethyl-8-(1-D-ribityl)lumazine + phosphate + 2 H2O + H(+). Its pathway is cofactor biosynthesis; riboflavin biosynthesis; riboflavin from 2-hydroxy-3-oxobutyl phosphate and 5-amino-6-(D-ribitylamino)uracil: step 1/2. Functionally, catalyzes the formation of 6,7-dimethyl-8-ribityllumazine by condensation of 5-amino-6-(D-ribitylamino)uracil with 3,4-dihydroxy-2-butanone 4-phosphate. This is the penultimate step in the biosynthesis of riboflavin. The sequence is that of 6,7-dimethyl-8-ribityllumazine synthase from Helicobacter pylori (strain Shi470).